Consider the following 194-residue polypeptide: uncharacterized protein (194 aa).

Positions 1–22 (MNKVTKTAIAGLLALFAGNAAA) are cleaved as a signal peptide. A disulfide bridge links cysteine 38 with cysteine 78.

The protein belongs to the fimbrial protein family.

It localises to the fimbrium. Functionally, part of the yraHIJK fimbrial operon. Could contribute to adhesion to various surfaces in specific environmental niches. Increases adhesion to eukaryotic T24 bladder epithelial cells in the absence of fim operon. This is an uncharacterized protein from Escherichia coli (strain K12).